A 1104-amino-acid polypeptide reads, in one-letter code: Protein KIBRA (1104 aa).

WW domains lie at 6 to 39 and 53 to 86; these read LPLP…DPRD and DELP…DPRV. Positions 107–193 form a coiled coil; it reads LSAQKEIYQV…ELQFKERGFQ (87 aa). A Phosphoserine modification is found at serine 141. Disordered stretches follow at residues 429 to 449 and 509 to 547; these read SMQS…RGSL and TQKA…SPPC. Residues 527–542 show a composition bias toward low complexity; that stretch reads TPRSMTSLSPRSSLSS. Residue serine 535 is modified to Phosphoserine. At serine 542 the chain carries Phosphoserine; by CDK1. One can recognise a C2 domain in the interval 659 to 782; the sequence is GATRVQIALK…RSGERSTRWY (124 aa). The disordered stretch occupies residues 822–949; sequence LEKRQEGRSS…DSSTLSKKPP (128 aa). The interval 836-1104 is interaction with histone H3; it reads EGSWTYEEEA…NIPALSADDV (269 aa). Acidic residues predominate over residues 841-862; sequence YEEEASENEAVAEEEEEGEEDV. 3 positions are modified to phosphoserine: serine 887, serine 891, and serine 919. The span at 916–930 shows a compositional bias: polar residues; it reads IIRSKTFSPGPQSQY. Residue threonine 921 is modified to Phosphothreonine. The residue at position 923 (serine 923) is a Phosphoserine; by CDK1. The residue at position 939 (serine 939) is a Phosphoserine. Interaction with PRKCZ regions lie at residues 945–988 and 948–967; these read SKKP…LDLQ and PPFV…RPSS. Residues serine 967 and serine 970 each carry the phosphoserine; by PKC/PRKCZ modification. The stretch at 994-1024 forms a coiled coil; it reads HSQLTQEISVLKELKEHLEQAKNHGEKELPQ. An ADDV motif motif is present at residues 1102–1104; sequence DDV.

This sequence belongs to the WWC family. KIBRA subfamily. Homodimer. Forms heterodimers with WWC2 and WWC3. Interacts with DDN. Interacts with DYNLL1 and histone H3. The interaction with DYNLL1 is mandatory for the recruitment and transactivation functions of ESR1 or DYNLL1 to the target chromatin and the interaction with histone H3 ensures proper regulatory interaction of WWC1-DYNLL1-ESR1 complexes with target chromatin. Interacts (via WW domains) with DDR1 (via PPxY motif) in a collagen-regulated manner. Interacts with PRKCZ (via the protein kinase domain). Forms a tripartite complex with DDR1 and PRKCZ, but predominantly in the absence of collagen. Interacts (via the ADDV motif) with PATJ (via PDZ domain 8). Interacts (via WW domains) with SYNPO (via PPxY motifs). Interacts with NF2 and SNX4. Interacts with CCDC141; retains AMPAR in the cytosol after internalization. Interacts with DLC1 and PRKCZ. Interacts (via WW domains) with LATS1 and LATS2. In terms of processing, phosphorylation at Ser-542 and Ser-923 by CDK1 in response to spindle damage stress regulates mitotic exit, these two sites are dephosphorylated by CDC14B. Mammary epithelium.

It is found in the cytoplasm. Its subcellular location is the perinuclear region. The protein resides in the nucleus. It localises to the cell projection. The protein localises to the ruffle membrane. It is found in the cytosol. Regulator of the Hippo signaling pathway, also known as the Salvador-Warts-Hippo (SWH) pathway. Enhances phosphorylation of LATS1 and YAP1 and negatively regulates cell proliferation and organ growth due to a suppression of the transcriptional activity of YAP1, the major effector of the Hippo pathway. Along with NF2 can synergistically induce the phosphorylation of LATS1 and LATS2 and function in the regulation of Hippo signaling pathway. Acts as a transcriptional coactivator of ESR1 which plays an essential role in DYNLL1-mediated ESR1 transactivation. Modulates directional migration of podocytes. May be associated with memory performance. Regulates collagen-stimulated activation of the ERK/MAPK cascade. Plays an important role in regulating AMPA-selective glutamate receptors (AMPARs) trafficking. This is Protein KIBRA (Wwc1) from Mus musculus (Mouse).